The chain runs to 368 residues: tRNA 2-selenouridine synthase (368 aa).

One can recognise a Rhodanese domain in the interval 15 to 138 (MLSGHPMIDV…MRQYLIEVID (124 aa)). Catalysis depends on cysteine 98, which acts as the S-selanylcysteine intermediate.

This sequence belongs to the SelU family. Monomer.

The catalysed reaction is 5-methylaminomethyl-2-thiouridine(34) in tRNA + selenophosphate + (2E)-geranyl diphosphate + H2O + H(+) = 5-methylaminomethyl-2-selenouridine(34) in tRNA + (2E)-thiogeraniol + phosphate + diphosphate. It carries out the reaction 5-methylaminomethyl-2-thiouridine(34) in tRNA + (2E)-geranyl diphosphate = 5-methylaminomethyl-S-(2E)-geranyl-thiouridine(34) in tRNA + diphosphate. It catalyses the reaction 5-methylaminomethyl-S-(2E)-geranyl-thiouridine(34) in tRNA + selenophosphate + H(+) = 5-methylaminomethyl-2-(Se-phospho)selenouridine(34) in tRNA + (2E)-thiogeraniol. The enzyme catalyses 5-methylaminomethyl-2-(Se-phospho)selenouridine(34) in tRNA + H2O = 5-methylaminomethyl-2-selenouridine(34) in tRNA + phosphate. In terms of biological role, involved in the post-transcriptional modification of the uridine at the wobble position (U34) of tRNA(Lys), tRNA(Glu) and tRNA(Gln). Catalyzes the conversion of 2-thiouridine (S2U-RNA) to 2-selenouridine (Se2U-RNA). Acts in a two-step process involving geranylation of 2-thiouridine (S2U) to S-geranyl-2-thiouridine (geS2U) and subsequent selenation of the latter derivative to 2-selenouridine (Se2U) in the tRNA chain. The polypeptide is tRNA 2-selenouridine synthase (Shewanella woodyi (strain ATCC 51908 / MS32)).